A 207-amino-acid polypeptide reads, in one-letter code: Interleukin-6 (207 aa).

An N-terminal signal peptide occupies residues 1 to 20 (MNSLSTSAFSLGLLLVMATA). Residues Cys-67 and Cys-73 are joined by a disulfide bond. Phosphoserine is present on Ser-76. A disulfide bridge links Cys-96 with Cys-106.

This sequence belongs to the IL-6 superfamily. Component of a hexamer of two molecules each of IL6, IL6R and IL6ST; first binds to IL6R to associate with the signaling subunit IL6ST. Interacts with IL6R (via the N-terminal ectodomain); this interaction may be affected by IL6R-binding with SORL1, hence decreasing IL6 cis signaling. Interacts with SORL1 (via the N-terminal ectodomain); this interaction leads to IL6 internalization and lysosomal degradation. May form a trimeric complex with the soluble SORL1 ectodomain and soluble IL6R receptor; this interaction might stabilize circulating IL6, hence promoting IL6 trans signaling.

It is found in the secreted. In terms of biological role, cytokine with a wide variety of biological functions in immunity, tissue regeneration, and metabolism. Binds to IL6R, then the complex associates to the signaling subunit IL6ST/gp130 to trigger the intracellular IL6-signaling pathway. The interaction with the membrane-bound IL6R and IL6ST stimulates 'classic signaling', whereas the binding of IL6 and soluble IL6R to IL6ST stimulates 'trans-signaling'. Alternatively, 'cluster signaling' occurs when membrane-bound IL6:IL6R complexes on transmitter cells activate IL6ST receptors on neighboring receiver cells. Its function is as follows. IL6 is a potent inducer of the acute phase response. Rapid production of IL6 contributes to host defense during infection and tissue injury, but excessive IL6 synthesis is involved in disease pathology. In the innate immune response, is synthesized by myeloid cells, such as macrophages and dendritic cells, upon recognition of pathogens through toll-like receptors (TLRs) at the site of infection or tissue injury. In the adaptive immune response, is required for the differentiation of B cells into immunoglobulin-secreting cells. Plays a major role in the differentiation of CD4(+) T cell subsets. Essential factor for the development of T follicular helper (Tfh) cells that are required for the induction of germinal-center formation. Required to drive naive CD4(+) T cells to the Th17 lineage. Also required for proliferation of myeloma cells and the survival of plasmablast cells. Functionally, acts as an essential factor in bone homeostasis and on vessels directly or indirectly by induction of VEGF, resulting in increased angiogenesis activity and vascular permeability. Induces, through 'trans-signaling' and synergistically with IL1B and TNF, the production of VEGF. Involved in metabolic controls, is discharged into the bloodstream after muscle contraction increasing lipolysis and improving insulin resistance. 'Trans-signaling' in central nervous system also regulates energy and glucose homeostasis. Mediates, through GLP-1, crosstalk between insulin-sensitive tissues, intestinal L cells and pancreatic islets to adapt to changes in insulin demand. Also acts as a myokine. Plays a protective role during liver injury, being required for maintenance of tissue regeneration. Also has a pivotal role in iron metabolism by regulating HAMP/hepcidin expression upon inflammation or bacterial infection. Through activation of IL6ST-YAP-NOTCH pathway, induces inflammation-induced epithelial regeneration. The polypeptide is Interleukin-6 (IL6) (Vulpes vulpes (Red fox)).